Reading from the N-terminus, the 1074-residue chain is ADAMTS-like protein 4 (1074 aa).

The signal sequence occupies residues 1-24 (MENWTGRPWLYLLLLLSLPQLCLD). Residues 48–93 (GPWVQWASCSQPCGVGVQRRSRTCQLPTVQLHPSLPLPPRPPRHPE) form the TSP type-1 1 domain. Positions 77–342 (QLHPSLPLPP…QHPGAWLPLL (266 aa)) are disordered. The segment covering 103-119 (RPQTSPETLPLYRTQSR) has biased composition (polar residues). The segment covering 132–152 (LGREETQEIRAARRSRLRDPI) has biased composition (basic and acidic residues). Residues 206 to 226 (ANGSPQTELPPTELSVHTPSP) are compositionally biased toward polar residues. A compositionally biased stretch (gly residues) spans 310–323 (GQQGQGPWGTGGTP). N490 carries N-linked (GlcNAc...) (complex) asparagine glycosylation. 5 TSP type-1 domains span residues 723 to 782 (CPPY…QLRL), 783 to 842 (CGHW…GPCT), 845 to 909 (WFHS…GPCE), 910 to 969 (RTWR…QGQA), and 970 to 1026 (CQDR…QPCS). The N-linked (GlcNAc...) asparagine glycan is linked to N773. Positions 1029 to 1066 (PDDQCKDSSPHCPLVVQARLCVYPYYTATCCRSCAHVL) constitute a PLAC domain.

In terms of assembly, interacts with CTSB. Interacts with FBN1. In terms of processing, N-glycosylated. Can be O-fucosylated by POFUT2 on a serine or a threonine residue found within the consensus sequence C1-X(2)-(S/T)-C2-G of the TSP type-1 repeat domains where C1 and C2 are the first and second cysteine residue of the repeat, respectively. Fucosylated repeats can then be further glycosylated by the addition of a beta-1,3-glucose residue by the glucosyltransferase, B3GALTL. Fucosylation mediates the efficient secretion of ADAMTS family members. Can also be C-glycosylated with one or two mannose molecules on tryptophan residues within the consensus sequence W-X-X-W of the TPRs. N- and C-glycosylations can also facilitate secretion. Expressed in colon, heart, leukocyte, liver, lung, skeletal muscle, spleen, testis and placenta. Weaker expression in bone marrow, brain tissue, kidney and pancreas. Expression studies in fetal tissues reveal strong expression in heart, kidney, liver, lung and skeletal muscle, but weaker expression in fetal brain and skin.

The protein resides in the secreted. It localises to the extracellular space. The protein localises to the extracellular matrix. Functionally, positive regulation of apoptosis. May facilitate FBN1 microfibril biogenesis. The chain is ADAMTS-like protein 4 (ADAMTSL4) from Homo sapiens (Human).